The chain runs to 585 residues: Phosphomethylpyrimidine synthase (585 aa).

Residues 89-107 (RGDTESYEGRHVKPEDNGY) are compositionally biased toward basic and acidic residues. Residues 89–116 (RGDTESYEGRHVKPEDNGYRSRNGSHQH) form a disordered region. Substrate is bound by residues Asn199, Met228, Tyr257, His293, 313–315 (SRG), 354–357 (DGLR), and Glu393. Residue His397 participates in Zn(2+) binding. Tyr420 serves as a coordination point for substrate. His461 is a binding site for Zn(2+). Positions 541, 544, and 549 each coordinate [4Fe-4S] cluster.

It belongs to the ThiC family. [4Fe-4S] cluster serves as cofactor.

The catalysed reaction is 5-amino-1-(5-phospho-beta-D-ribosyl)imidazole + S-adenosyl-L-methionine = 4-amino-2-methyl-5-(phosphooxymethyl)pyrimidine + CO + 5'-deoxyadenosine + formate + L-methionine + 3 H(+). The protein operates within cofactor biosynthesis; thiamine diphosphate biosynthesis. Catalyzes the synthesis of the hydroxymethylpyrimidine phosphate (HMP-P) moiety of thiamine from aminoimidazole ribotide (AIR) in a radical S-adenosyl-L-methionine (SAM)-dependent reaction. This chain is Phosphomethylpyrimidine synthase, found in Bacillus pumilus (strain SAFR-032).